Consider the following 209-residue polypeptide: Small ribosomal subunit protein uS3 (209 aa).

Residues 38-107 (IRKFIKNRYY…RVVINIEEIK (70 aa)) enclose the KH type-2 domain.

It belongs to the universal ribosomal protein uS3 family. As to quaternary structure, part of the 30S ribosomal subunit. Forms a tight complex with proteins S10 and S14.

Functionally, binds the lower part of the 30S subunit head. Binds mRNA in the 70S ribosome, positioning it for translation. This is Small ribosomal subunit protein uS3 from Thermotoga petrophila (strain ATCC BAA-488 / DSM 13995 / JCM 10881 / RKU-1).